Reading from the N-terminus, the 734-residue chain is Ribosomal biogenesis protein LAS1L (734 aa).

Residues 204-255 form a disordered region; the sequence is EGIEEEDQEEDKNIVVDDITEQKPEPQDDGKSTESDVKADGDSKGSEEVDSH. Basic and acidic residues predominate over residues 214–255; it reads DKNIVVDDITEQKPEPQDDGKSTESDVKADGDSKGSEEVDSH. Residues Lys215 and Lys226 each participate in a glycyl lysine isopeptide (Lys-Gly) (interchain with G-Cter in SUMO2) cross-link. Phosphoserine is present on residues Ser441, Ser523, and Ser560. The segment covering 547 to 561 has biased composition (polar residues); the sequence is GSEAKAQQQEEQGSV. The interval 547 to 619 is disordered; that stretch reads GSEAKAQQQE…PFSTGQESPT (73 aa). The span at 563–575 shows a compositional bias: basic and acidic residues; that stretch reads DVKEEEKEEKEVL. Acidic residues predominate over residues 578–605; the sequence is QVEEEEENDDQEEEEEDEDDEDDEEEDR. The residue at position 617 (Ser617) is a Phosphoserine. Residues 636–655 are interaction with NOL9; the sequence is SAWQVSSEDVRWDTFPLGRM.

Belongs to the LAS1 family. In terms of assembly, component of some MLL1/MLL complex, at least composed of the core components KMT2A/MLL1, ASH2L, HCFC1/HCF1, WDR5 and RBBP5, as well as the facultative components BACC1, CHD8, E2F6, HSP70, INO80C, KANSL1, LAS1L, MAX, MCRS1, MGA, KAT8/MOF, PELP1, PHF20, PRP31, RING2, RUVB1/TIP49A, RUVB2/TIP49B, SENP3, TAF1, TAF4, TAF6, TAF7, TAF9 and TEX10. Component of the 5FMC complex, at least composed of PELP1, LAS1L, TEX10, WDR18 and SENP3; the complex interacts with methylated CHTOP and ZNF148. Interacts with NOL9 to form an ITS2 pre-rRNA endonuclease-kinase complex.

Its subcellular location is the nucleus. It localises to the nucleolus. The protein resides in the nucleoplasm. It is found in the cytoplasm. Functionally, required for the synthesis of the 60S ribosomal subunit and maturation of the 28S rRNA. Functions as a component of the Five Friends of Methylated CHTOP (5FMC) complex; the 5FMC complex is recruited to ZNF148 by methylated CHTOP, leading to desumoylation of ZNF148 and subsequent transactivation of ZNF148 target genes. Required for the efficient pre-rRNA processing at both ends of internal transcribed spacer 2 (ITS2). The sequence is that of Ribosomal biogenesis protein LAS1L (LAS1L) from Homo sapiens (Human).